Here is a 164-residue protein sequence, read N- to C-terminus: UPF0178 protein RPB_3201 (164 aa).

This sequence belongs to the UPF0178 family.

The protein is UPF0178 protein RPB_3201 of Rhodopseudomonas palustris (strain HaA2).